Consider the following 212-residue polypeptide: MTQGAVKTTGKRSRAVSAKKKAILSAALDTFSQFGFHGTRLEQIAELAGVSKTNLLYYFPSKEALYIAVLRQILDIWLAPLKAFREDFAPLAAIKEYIRLKLEVSRDYPQASRLFCMEMLAGAPLLMDELTGDLKSLIDEKSALIAGWVKSGKLAPIDPQHLIFMIWASTQHYADFAPQVEAVTGATLRDEVFFNQTVENVQRIIIEGIRPR.

The HTH tetR-type domain occupies S17 to W77. The H-T-H motif DNA-binding region spans T39–Y58.

Homodimer.

In terms of biological role, master transcription regulator which represses the degradation of pyrimidines (rutABCDEFG) and purines (gcl operon) for maintenance of metabolic balance between pyrimidines and purines. It also regulates the synthesis of pyrimidine nucleotides and arginine from glutamine (carAB) and the supply of glutamate (gadABWX). In Escherichia coli O157:H7, this protein is HTH-type transcriptional regulator RutR (rutR).